A 218-amino-acid polypeptide reads, in one-letter code: Ribose-5-phosphate isomerase A (218 aa).

Residues 28–31 (TGST), 81–84 (DGAD), and 94–97 (KGGG) contribute to the substrate site. E103 functions as the Proton acceptor in the catalytic mechanism. K121 contacts substrate.

This sequence belongs to the ribose 5-phosphate isomerase family. Homodimer.

The enzyme catalyses aldehydo-D-ribose 5-phosphate = D-ribulose 5-phosphate. It participates in carbohydrate degradation; pentose phosphate pathway; D-ribose 5-phosphate from D-ribulose 5-phosphate (non-oxidative stage): step 1/1. Its function is as follows. Catalyzes the reversible conversion of ribose-5-phosphate to ribulose 5-phosphate. The sequence is that of Ribose-5-phosphate isomerase A from Aliivibrio salmonicida (strain LFI1238) (Vibrio salmonicida (strain LFI1238)).